A 129-amino-acid chain; its full sequence is uncharacterized protein (129 aa).

A helical transmembrane segment spans residues 77–97 (ILAVFIISFIIVVVGVLLLGL). The interval 109 to 129 (SSNDKKLQSNDEEKQALAEKA) is disordered. Residues 111–129 (NDKKLQSNDEEKQALAEKA) are compositionally biased toward basic and acidic residues.

The protein localises to the vacuole membrane. This is an uncharacterized protein from Saccharomyces cerevisiae (strain ATCC 204508 / S288c) (Baker's yeast).